A 133-amino-acid polypeptide reads, in one-letter code: Protein OPG104 (133 aa).

The Virion surface segment spans residues 1–111 (MTDEQIYAFC…RYLNQEIRYP (111 aa)). Residues 112–132 (IIDIKWLPIGLLALAILILAF) traverse the membrane as a helical; Signal-anchor segment.

The protein belongs to the orthopoxvirus OPG104 family. Part of a stable entry-fusion complex (EFC) which is at least composed of proteins OPG143, OPG147, OPG155, OPG086, OPG094, OPG107, OPG104, and OPG099. Formation of the viral membrane is necessary for the assembly of the complex.

The protein localises to the virion membrane. Envelope protein part of the entry-fusion complex responsible for the virus membrane fusion with host cell membrane during virus entry. Also plays a role in cell-cell fusion (syncytium formation). In Variola virus (isolate Human/India/Ind3/1967) (VARV), this protein is Protein OPG104 (OPG104).